Consider the following 494-residue polypeptide: Homeotic protein bicoid (494 aa).

3 disordered regions span residues 1–49 (MAQP…PPQF), 149–210 (RRRH…TAHM), and 263–293 (QQVHNHQQQLHHQGNHVPHQMQQQQQQAQQQ). Residues 14–40 (PLPHTHTHPHPHSHPHPHSHPHPHHQH) are compositionally biased toward basic residues. The homeobox DNA-binding region spans 97–156 (PRRTRTTFTSSQIAELEQHFLQGRYLTAPRLADLSAKLALGTAQVKIWFKNRRRRHKIQS). Over residues 154–163 (IQSDQHKDQS) the composition is skewed to basic and acidic residues. The RNA-binding stretch occupies residues 433 to 440 (RGAAFAKF).

Belongs to the paired homeobox family. Bicoid subfamily. Interacts with Bin1; in vitro and yeast cells. Interacts with bin3. As to expression, maternal expression is an anterior cap concentrated in the cortical cytoplasm. Its transcript is produced maternally and sequestered near the anterior pole of the mature oocyte. After egg deposition, it is translated into protein, which diffuses toward the posterior, forming a long-range anterior gradient.

Its subcellular location is the nucleus. Its function is as follows. Segment polarity transcription factor that provides positional cues for the development of head and thoracic segments. Forms a protein concentration gradient that patterns the anterior-posterior axis during embryogenesis and promotes the expression of anterior gap genes, such as hunchback (hb), ocelliless (oc), and buttonhead (btd). Binds to regulatory DNA sequences containing a 5'-TAATCC-3' sequence motif. Also binds RNA. Interacts with Bin1 to repress transcription of bicoid target genes in the anterior tip of the embryo; a process known as retraction. The polypeptide is Homeotic protein bicoid (Drosophila melanogaster (Fruit fly)).